A 298-amino-acid polypeptide reads, in one-letter code: 4-diphosphocytidyl-2-C-methyl-D-erythritol kinase (298 aa).

Lys15 is an active-site residue. 100–110 (PIAAGIGGGSA) is an ATP binding site. Residue Asp142 is part of the active site.

This sequence belongs to the GHMP kinase family. IspE subfamily.

It catalyses the reaction 4-CDP-2-C-methyl-D-erythritol + ATP = 4-CDP-2-C-methyl-D-erythritol 2-phosphate + ADP + H(+). Its pathway is isoprenoid biosynthesis; isopentenyl diphosphate biosynthesis via DXP pathway; isopentenyl diphosphate from 1-deoxy-D-xylulose 5-phosphate: step 3/6. Catalyzes the phosphorylation of the position 2 hydroxy group of 4-diphosphocytidyl-2C-methyl-D-erythritol. The chain is 4-diphosphocytidyl-2-C-methyl-D-erythritol kinase from Rhodopseudomonas palustris (strain BisA53).